Here is a 671-residue protein sequence, read N- to C-terminus: Acetyl-coenzyme A synthetase (671 aa).

Residues 1 to 21 (MPTASASESSSNQPESSNASG) are disordered. CoA contacts are provided by residues 221–224 (RRGK), Thr339, and Asn363. Residues 415-417 (GEG), 439-444 (DTWWQT), Asp528, and Arg543 each bind ATP. Ser551 is a CoA binding site. Arg554 serves as a coordination point for ATP. Residues Val565, His567, and Val570 each coordinate Mg(2+). Arg611 is a CoA binding site. An N6-acetyllysine modification is found at Lys636.

The protein belongs to the ATP-dependent AMP-binding enzyme family. Requires Mg(2+) as cofactor. Post-translationally, acetylated. Deacetylation by the SIR2-homolog deacetylase activates the enzyme.

The catalysed reaction is acetate + ATP + CoA = acetyl-CoA + AMP + diphosphate. Functionally, catalyzes the conversion of acetate into acetyl-CoA (AcCoA), an essential intermediate at the junction of anabolic and catabolic pathways. AcsA undergoes a two-step reaction. In the first half reaction, AcsA combines acetate with ATP to form acetyl-adenylate (AcAMP) intermediate. In the second half reaction, it can then transfer the acetyl group from AcAMP to the sulfhydryl group of CoA, forming the product AcCoA. The chain is Acetyl-coenzyme A synthetase from Rhodopirellula baltica (strain DSM 10527 / NCIMB 13988 / SH1).